A 307-amino-acid polypeptide reads, in one-letter code: MDHFIKLLPKLTPHLRKGDCGKMGVIGGSLEYTGAPYFAASSASRLGADLIHIFCDPDAAQVIKGYSPDLIVHPGMTANSIIPKLSRMDAIVIGPGLGRNPNIWPLMQELFEFVRNRDVPFVIDGDGLWFVSEHIEKFPRQMSATVLTPNIVEFSRLCKSALGEEDVLNVRNNSQLQHLAAELSRKMNVTIYLKGEVDLVVTPNGEVSKCSTESSLRRCGGQGDVTAGSLGLFLYWAKKNLGDDWTSAHHEAGIASSWLVRTAGRRAFEKHGRSMNTPLLLDEIPKLVRDVETREMKDTVHTDSSKH.

The 291-residue stretch at 1-291 (MDHFIKLLPK…DEIPKLVRDV (291 aa)) folds into the YjeF C-terminal domain. Residues glycine 96 and 150–156 (NIVEFSR) each bind (6S)-NADPHX. ATP is bound by residues 194–198 (KGEVD) and 214–223 (SSLRRCGGQG). A (6S)-NADPHX-binding site is contributed by aspartate 224.

Belongs to the NnrD/CARKD family. It depends on Mg(2+) as a cofactor.

It catalyses the reaction (6S)-NADHX + ATP = ADP + phosphate + NADH + H(+). It carries out the reaction (6S)-NADPHX + ATP = ADP + phosphate + NADPH + H(+). Catalyzes the dehydration of the S-form of NAD(P)HX at the expense of ATP, which is converted to ADP. Together with NAD(P)HX epimerase, which catalyzes the epimerization of the S- and R-forms, the enzyme allows the repair of both epimers of NAD(P)HX, a damaged form of NAD(P)H that is a result of enzymatic or heat-dependent hydration. This Caenorhabditis elegans protein is ATP-dependent (S)-NAD(P)H-hydrate dehydratase.